The chain runs to 237 residues: Ribonuclease PH (237 aa).

Phosphate is bound by residues Arg-86 and 124 to 126 (GTR).

The protein belongs to the RNase PH family. In terms of assembly, homohexameric ring arranged as a trimer of dimers.

The enzyme catalyses tRNA(n+1) + phosphate = tRNA(n) + a ribonucleoside 5'-diphosphate. Its function is as follows. Phosphorolytic 3'-5' exoribonuclease that plays an important role in tRNA 3'-end maturation. Removes nucleotide residues following the 3'-CCA terminus of tRNAs; can also add nucleotides to the ends of RNA molecules by using nucleoside diphosphates as substrates, but this may not be physiologically important. Probably plays a role in initiation of 16S rRNA degradation (leading to ribosome degradation) during starvation. This chain is Ribonuclease PH, found in Methylobacterium sp. (strain 4-46).